A 348-amino-acid chain; its full sequence is Rhodopsin (348 aa).

Met1 carries the post-translational modification N-acetylmethionine. The Extracellular portion of the chain corresponds to Met1–Gln36. Asn2 and Asn15 each carry an N-linked (GlcNAc...) asparagine glycan. A helical membrane pass occupies residues Phe37 to Val61. The Cytoplasmic portion of the chain corresponds to Thr62–Asn73. Residues Tyr74 to Tyr96 form a helical membrane-spanning segment. At Thr97 to Cys110 the chain is on the extracellular side. An intrachain disulfide couples Cys110 to Cys187. Residues Asn111–Ile133 form a helical membrane-spanning segment. Residues Glu134–Tyr136 carry the 'Ionic lock' involved in activated form stabilization motif. The Cytoplasmic segment spans residues Glu134–His152. The chain crosses the membrane as a helical span at residues Ala153–Val173. Over Gly174–Ser202 the chain is Extracellular. Glu201 contributes to the Zn(2+) binding site. Residues Phe203 to Gly224 form a helical membrane-spanning segment. Residues Gln225–Arg252 lie on the Cytoplasmic side of the membrane. Residues Met253–Tyr274 traverse the membrane as a helical segment. Topologically, residues Ile275–Ile286 are extracellular. Residue Gln279 coordinates Zn(2+). Residues Phe287–Met308 form a helical membrane-spanning segment. An N6-(retinylidene)lysine modification is found at Lys296. Over Met309–Ala348 the chain is Cytoplasmic. 2 S-palmitoyl cysteine lipidation sites follow: Cys322 and Cys323. Residues Asp330 to Ala348 form an interaction with SAG region. Ser334 carries the post-translational modification Phosphoserine. Thr336 is subject to Phosphothreonine. A Phosphoserine modification is found at Ser338. Phosphothreonine is present on residues Thr340 and Thr342. Ser343 is subject to Phosphoserine.

The protein belongs to the G-protein coupled receptor 1 family. Opsin subfamily. As to quaternary structure, homodimer. May form a complex composed of RHO, GRK1 and RCVRN in a Ca(2+)-dependent manner; RCVRN prevents the interaction between GRK1 and RHO. Interacts with GRK1. Interacts (phosphorylated form) with SAG. Interacts with GNAT1. Interacts with GNAT3. SAG and G-proteins compete for a common binding site. Interacts with PRCD; the interaction promotes PRCD stability. Forms a complex with ASAP1 and ARF4. Forms a complex with ASAP1, RAB11A, Rabin8/RAB3IP, ARF4 and RAB11FIP3; the complex regulates Golgi-to-cilia rhodopsin/RHO transport in photoreceptors. Phosphorylated on some or all of the serine and threonine residues present in the C-terminal region. Post-translationally, contains one covalently linked retinal chromophore. Upon light absorption, the covalently bound 11-cis-retinal is converted to all-trans-retinal. After hydrolysis of the Schiff base and release of the covalently bound all-trans-retinal, active rhodopsin is regenerated by binding of a fresh molecule of 11-cis-retinal.

The protein resides in the membrane. Its subcellular location is the cell projection. It localises to the cilium. The protein localises to the photoreceptor outer segment. Photoreceptor required for image-forming vision at low light intensity. Required for photoreceptor cell viability after birth. Light-induced isomerization of 11-cis to all-trans retinal triggers a conformational change that activates signaling via G-proteins. Subsequent receptor phosphorylation mediates displacement of the bound G-protein alpha subunit by the arrestin SAG and terminates signaling. The protein is Rhodopsin (RHO) of Oryctolagus cuniculus (Rabbit).